Here is a 439-residue protein sequence, read N- to C-terminus: 23S rRNA (uracil(1939)-C(5))-methyltransferase RlmD (439 aa).

Residues 10-69 (KTQLNTRHQAVQVERLDHHGAGIAYLKKKPLFIDGALPGEEVVTQLVEEKSKFARGKLIK) form the TRAM domain. Residues Cys-82, Cys-88, Cys-91, and Cys-169 each coordinate [4Fe-4S] cluster. 6 residues coordinate S-adenosyl-L-methionine: Gln-272, Phe-301, Asn-306, Glu-322, Asn-349, and Asp-370. Catalysis depends on Cys-396, which acts as the Nucleophile.

The protein belongs to the class I-like SAM-binding methyltransferase superfamily. RNA M5U methyltransferase family. RlmD subfamily.

The catalysed reaction is uridine(1939) in 23S rRNA + S-adenosyl-L-methionine = 5-methyluridine(1939) in 23S rRNA + S-adenosyl-L-homocysteine + H(+). Its function is as follows. Catalyzes the formation of 5-methyl-uridine at position 1939 (m5U1939) in 23S rRNA. This is 23S rRNA (uracil(1939)-C(5))-methyltransferase RlmD from Vibrio parahaemolyticus serotype O3:K6 (strain RIMD 2210633).